Here is a 422-residue protein sequence, read N- to C-terminus: Dihydroorotase (422 aa).

The Zn(2+) site is built by His-59 and His-61. Residues 61-63 (HFR) and Asn-93 contribute to the substrate site. Zn(2+)-binding residues include Asp-150, His-177, and His-230. Asn-276 serves as a coordination point for substrate. Asp-303 is a Zn(2+) binding site. Asp-303 is a catalytic residue. Substrate is bound at residue His-307.

It belongs to the metallo-dependent hydrolases superfamily. DHOase family. Class I DHOase subfamily. Requires Zn(2+) as cofactor.

The enzyme catalyses (S)-dihydroorotate + H2O = N-carbamoyl-L-aspartate + H(+). Its pathway is pyrimidine metabolism; UMP biosynthesis via de novo pathway; (S)-dihydroorotate from bicarbonate: step 3/3. Catalyzes the reversible cyclization of carbamoyl aspartate to dihydroorotate. This chain is Dihydroorotase, found in Streptococcus pneumoniae serotype 4 (strain ATCC BAA-334 / TIGR4).